Reading from the N-terminus, the 370-residue chain is Luciferin sulfotransferase (370 aa).

Position 90–95 (90–95 (KAGTTW)) interacts with 3'-phosphoadenylyl sulfate. His165 acts as the Proton acceptor in catalysis. 3'-phosphoadenylyl sulfate is bound by residues Arg189, Ser197, Tyr250, 284–289 (LSFESM), and 316–320 (FMRSG).

Belongs to the sulfotransferase 1 family.

It catalyses the reaction firefly D-luciferin + 3'-phosphoadenylyl sulfate = firefly D-sulfoluciferin + adenosine 3',5'-bisphosphate + H(+). The catalysed reaction is firefly L-luciferin + 3'-phosphoadenylyl sulfate = firefly L-sulfoluciferin + adenosine 3',5'-bisphosphate + H(+). With respect to regulation, sulfoluciferin formation is inhibited by the product adenosine 3',5'-bisphosphate. Its function is as follows. Catalyzes the production of firefly sulfoluciferin from luciferin using the sulfo-donor 3'-phosphoadenylyl sulfate (PAPS). Is also able to catalyze the reverse reaction, i.e. the adenosine 3',5'-bisphosphate-dependent desulfonation of sulfoluciferin. Can use either D- or L-luciferin stereoisomer as substrate. Sulfoluciferin, which is not a substrate of P.pyralis luciferase, likely serves as a luciferin storage form in fireflies. The sequence is that of Luciferin sulfotransferase from Photinus pyralis (Common eastern firefly).